We begin with the raw amino-acid sequence, 506 residues long: Anaerobic nitric oxide reductase transcription regulator NorR (506 aa).

Asp57 bears the 4-aspartylphosphate mark. Residues 187–416 (MIGLSPAMTQ…LEHAIHRAVV (230 aa)) form the Sigma-54 factor interaction domain. ATP-binding positions include 215-222 (GETGTGKE) and 278-287 (ADNGTLFLDE). The segment at residues 481–500 (WAASARALETDVANLHRLAK) is a DNA-binding region (H-T-H motif).

It functions in the pathway nitrogen metabolism; nitric oxide reduction. Functionally, required for the expression of anaerobic nitric oxide (NO) reductase, acts as a transcriptional activator for at least the norVW operon. Activation also requires sigma-54. This Salmonella arizonae (strain ATCC BAA-731 / CDC346-86 / RSK2980) protein is Anaerobic nitric oxide reductase transcription regulator NorR.